We begin with the raw amino-acid sequence, 460 residues long: 25S rRNA (cytosine-C(5))-methyltransferase rcm1 (460 aa).

Residues 223-229 (CAAPGNK), glutamate 246, aspartate 273, and aspartate 293 each bind S-adenosyl-L-methionine. The Nucleophile role is filled by cysteine 350. The segment covering 430–439 (KMYKNDDDTK) has biased composition (basic and acidic residues). The segment at 430–460 (KMYKNDDDTKKRKRKKKKKEVKKKARIQGEE) is disordered. Over residues 440–460 (KRKRKKKKKEVKKKARIQGEE) the composition is skewed to basic residues.

It belongs to the class I-like SAM-binding methyltransferase superfamily. RsmB/NOP family. Interacts with trm112.

The protein localises to the nucleus. It is found in the nucleolus. The enzyme catalyses a cytidine in 25S rRNA + S-adenosyl-L-methionine = a 5-methylcytidine in 25S rRNA + S-adenosyl-L-homocysteine + H(+). S-adenosyl-L-methionine-dependent methyltransferase that specifically methylates the C(5) position of a cytosine in 25S rRNA. This chain is 25S rRNA (cytosine-C(5))-methyltransferase rcm1 (rcm1), found in Schizosaccharomyces pombe (strain 972 / ATCC 24843) (Fission yeast).